The sequence spans 203 residues: MNNNEKFIIGLGNPGKEYIQNRHNIGFLLLENFSEKYDSKFTLKNKLKSWYSEFKINNFTYRLFMPNTFMNNSGNAVRAIVDWYKIDLDRLFIIVDDIDLPLGKIRFRKKGSSGGHNGIKDIINKLQTENFNRIKIGIGSPPVNERKKTLNTISHVLGNISSKESLTLDRVYKKLIESLIELNDKNEDYIISELNSFHREENL.

TRNA is bound at residue Tyr-18. His-23 (proton acceptor) is an active-site residue. Phe-69, Asn-71, and Asn-117 together coordinate tRNA.

The protein belongs to the PTH family. In terms of assembly, monomer.

It localises to the cytoplasm. It catalyses the reaction an N-acyl-L-alpha-aminoacyl-tRNA + H2O = an N-acyl-L-amino acid + a tRNA + H(+). Its function is as follows. Hydrolyzes ribosome-free peptidyl-tRNAs (with 1 or more amino acids incorporated), which drop off the ribosome during protein synthesis, or as a result of ribosome stalling. Catalyzes the release of premature peptidyl moieties from peptidyl-tRNA molecules trapped in stalled 50S ribosomal subunits, and thus maintains levels of free tRNAs and 50S ribosomes. In Prochlorococcus marinus subsp. pastoris (strain CCMP1986 / NIES-2087 / MED4), this protein is Peptidyl-tRNA hydrolase.